Here is a 451-residue protein sequence, read N- to C-terminus: Trigger factor (451 aa).

Residues 163–248 (GDIIDMEYTV…IKALYANILP (86 aa)) enclose the PPIase FKBP-type domain.

The protein belongs to the FKBP-type PPIase family. Tig subfamily.

The protein resides in the cytoplasm. It catalyses the reaction [protein]-peptidylproline (omega=180) = [protein]-peptidylproline (omega=0). Its function is as follows. Involved in protein export. Acts as a chaperone by maintaining the newly synthesized protein in an open conformation. Functions as a peptidyl-prolyl cis-trans isomerase. This is Trigger factor from Leptospira interrogans serogroup Icterohaemorrhagiae serovar copenhageni (strain Fiocruz L1-130).